A 294-amino-acid chain; its full sequence is ATP synthase gamma chain (294 aa).

This sequence belongs to the ATPase gamma chain family. As to quaternary structure, F-type ATPases have 2 components, CF(1) - the catalytic core - and CF(0) - the membrane proton channel. CF(1) has five subunits: alpha(3), beta(3), gamma(1), delta(1), epsilon(1). CF(0) has three main subunits: a, b and c.

It localises to the cell inner membrane. In terms of biological role, produces ATP from ADP in the presence of a proton gradient across the membrane. The gamma chain is believed to be important in regulating ATPase activity and the flow of protons through the CF(0) complex. The sequence is that of ATP synthase gamma chain from Rhizobium rhizogenes (strain K84 / ATCC BAA-868) (Agrobacterium radiobacter).